The following is a 192-amino-acid chain: Peptidyl-tRNA hydrolase (192 aa).

Residue Tyr-14 participates in tRNA binding. His-19 acts as the Proton acceptor in catalysis. Residues Tyr-66 and Asn-68 each contribute to the tRNA site.

It belongs to the PTH family. Monomer.

It localises to the cytoplasm. It catalyses the reaction an N-acyl-L-alpha-aminoacyl-tRNA + H2O = an N-acyl-L-amino acid + a tRNA + H(+). Its function is as follows. Hydrolyzes ribosome-free peptidyl-tRNAs (with 1 or more amino acids incorporated), which drop off the ribosome during protein synthesis, or as a result of ribosome stalling. Functionally, catalyzes the release of premature peptidyl moieties from peptidyl-tRNA molecules trapped in stalled 50S ribosomal subunits, and thus maintains levels of free tRNAs and 50S ribosomes. The sequence is that of Peptidyl-tRNA hydrolase from Coprothermobacter proteolyticus (strain ATCC 35245 / DSM 5265 / OCM 4 / BT).